A 443-amino-acid chain; its full sequence is F-box only protein 39 (443 aa).

An F-box domain is found at 13–59 (QSCWATLPDVCLRRVFWWLGDRDRSRAALVCRKWNQIMYSADLWRYR).

As to quaternary structure, directly interacts with SKP1 and CUL1.

Its function is as follows. Substrate-recognition component of the SCF (SKP1-CUL1-F-box protein)-type E3 ubiquitin ligase complex. This chain is F-box only protein 39 (Fbxo39), found in Mus musculus (Mouse).